Here is a 508-residue protein sequence, read N- to C-terminus: Transcriptional regulatory protein moc3 (508 aa).

A disordered region spans residues 15–43; sequence NRTGSINSNPLYIPNPNVEPTPKPTKRRT. A DNA-binding region (zn(2)-C6 fungal-type) is located at residues 46 to 76; the sequence is GCLTCRRRRIKCDETKPFCLNCTKTNRECEG. 2 disordered regions span residues 110 to 146 and 174 to 193; these read ASSS…STVT and NHNV…KPSV. The segment covering 176–193 has biased composition (low complexity); the sequence is NVPTNNSSSATSSTKPSV.

In terms of assembly, interacts with zfs1.

The protein localises to the nucleus. Functionally, induces sexual development and ascus formation. Also involved in calcium homeostasis. This Schizosaccharomyces pombe (strain 972 / ATCC 24843) (Fission yeast) protein is Transcriptional regulatory protein moc3 (moc3).